A 481-amino-acid polypeptide reads, in one-letter code: Alkaline protease secretion protein AprF (481 aa).

The interval 462-481 is disordered; it reads PAPLHTLSKTDTEENRSALN. The span at 469–481 shows a compositional bias: basic and acidic residues; that stretch reads SKTDTEENRSALN.

The protein belongs to the outer membrane factor (OMF) (TC 1.B.17) family.

Its subcellular location is the cell outer membrane. Functionally, involved in the secretion of alkaline protease. This chain is Alkaline protease secretion protein AprF (aprF), found in Pseudomonas aeruginosa (strain ATCC 15692 / DSM 22644 / CIP 104116 / JCM 14847 / LMG 12228 / 1C / PRS 101 / PAO1).